The following is a 228-amino-acid chain: 7-cyano-7-deazaguanine synthase (228 aa).

An ATP-binding site is contributed by 9–19 (LSGGPDSTTVL). Zn(2+)-binding residues include Cys-193, Cys-203, Cys-206, and Cys-209.

This sequence belongs to the QueC family. The cofactor is Zn(2+).

It carries out the reaction 7-carboxy-7-deazaguanine + NH4(+) + ATP = 7-cyano-7-deazaguanine + ADP + phosphate + H2O + H(+). It functions in the pathway purine metabolism; 7-cyano-7-deazaguanine biosynthesis. Functionally, catalyzes the ATP-dependent conversion of 7-carboxy-7-deazaguanine (CDG) to 7-cyano-7-deazaguanine (preQ(0)). The sequence is that of 7-cyano-7-deazaguanine synthase from Rickettsia peacockii (strain Rustic).